The chain runs to 452 residues: Bifunctional protein GlmU (452 aa).

The segment at 1–226 (MAFSVVVLAA…AVEVEGVNNR (226 aa)) is pyrophosphorylase. Residues 8–11 (LAAG), Lys22, Gln73, and 78–79 (GT) each bind UDP-N-acetyl-alpha-D-glucosamine. Asp102 serves as a coordination point for Mg(2+). Residues Gly137, Glu151, Asn166, and Asn224 each coordinate UDP-N-acetyl-alpha-D-glucosamine. Asn224 contributes to the Mg(2+) binding site. A linker region spans residues 227–247 (LQLANLERALQNRQADELMTN). The N-acetyltransferase stretch occupies residues 248 to 452 (GVTLLDPSRF…IPNWPRPTKK (205 aa)). Arg330 and Lys348 together coordinate UDP-N-acetyl-alpha-D-glucosamine. The active-site Proton acceptor is the His360. 2 residues coordinate UDP-N-acetyl-alpha-D-glucosamine: Tyr363 and Asn374. Residues Ala377, 383 to 384 (NY), Ser402, Ala420, and Arg437 each bind acetyl-CoA.

It in the N-terminal section; belongs to the N-acetylglucosamine-1-phosphate uridyltransferase family. In the C-terminal section; belongs to the transferase hexapeptide repeat family. In terms of assembly, homotrimer. It depends on Mg(2+) as a cofactor.

Its subcellular location is the cytoplasm. The enzyme catalyses alpha-D-glucosamine 1-phosphate + acetyl-CoA = N-acetyl-alpha-D-glucosamine 1-phosphate + CoA + H(+). It carries out the reaction N-acetyl-alpha-D-glucosamine 1-phosphate + UTP + H(+) = UDP-N-acetyl-alpha-D-glucosamine + diphosphate. Its pathway is nucleotide-sugar biosynthesis; UDP-N-acetyl-alpha-D-glucosamine biosynthesis; N-acetyl-alpha-D-glucosamine 1-phosphate from alpha-D-glucosamine 6-phosphate (route II): step 2/2. The protein operates within nucleotide-sugar biosynthesis; UDP-N-acetyl-alpha-D-glucosamine biosynthesis; UDP-N-acetyl-alpha-D-glucosamine from N-acetyl-alpha-D-glucosamine 1-phosphate: step 1/1. It functions in the pathway bacterial outer membrane biogenesis; LPS lipid A biosynthesis. Functionally, catalyzes the last two sequential reactions in the de novo biosynthetic pathway for UDP-N-acetylglucosamine (UDP-GlcNAc). The C-terminal domain catalyzes the transfer of acetyl group from acetyl coenzyme A to glucosamine-1-phosphate (GlcN-1-P) to produce N-acetylglucosamine-1-phosphate (GlcNAc-1-P), which is converted into UDP-GlcNAc by the transfer of uridine 5-monophosphate (from uridine 5-triphosphate), a reaction catalyzed by the N-terminal domain. The protein is Bifunctional protein GlmU of Alteromonas mediterranea (strain DSM 17117 / CIP 110805 / LMG 28347 / Deep ecotype).